The sequence spans 180 residues: uncharacterized protein (180 aa).

An N-terminal signal peptide occupies residues 1 to 21; sequence MKQCIAFMAILALSLSAISEA. The tract at residues 23-81 is disordered; the sequence is GGRGVRSSGYSRPVATKPAPAPKQTQTQQQSQQPDATFGQQNMQNTATNTPNNPNNRLA. Residues 27-78 show a composition bias toward low complexity; it reads VRSSGYSRPVATKPAPAPKQTQTQQQSQQPDATFGQQNMQNTATNTPNNPNN.

This is an uncharacterized protein from Pasteurella multocida (strain Pm70).